The following is a 61-amino-acid chain: AKDGDFEGPPGCLKMGELCKGGTCCTKVYKYWKWRKLECLGKNDGWFKKKFICDEPCNPXX.

3 cysteine pairs are disulfide-bonded: cysteine 12/cysteine 25, cysteine 19/cysteine 39, and cysteine 24/cysteine 53.

Belongs to the neurotoxin 26 (DTX) family. Expressed by the venom gland.

It localises to the secreted. Acts by delaying the inactivation of presynaptic voltage-sensitive sodium channels (Nav). Acts against insects and causes a progressive spastic paralysis. The protein is Mu-diguetoxin-Dc1c of Diguetia canities (Desert bush spider).